Here is a 161-residue protein sequence, read N- to C-terminus: NADH-quinone oxidoreductase subunit I (161 aa).

2 4Fe-4S ferredoxin-type domains span residues 52 to 82 and 92 to 121; these read LRRYPNGEERCIACKLCEAVCPALAITIESE and KRYDIDLTKCIFCGFCEEACPVDAVVETRV. [4Fe-4S] cluster contacts are provided by cysteine 62, cysteine 65, cysteine 68, cysteine 72, cysteine 101, cysteine 104, cysteine 107, and cysteine 111.

The protein belongs to the complex I 23 kDa subunit family. As to quaternary structure, NDH-1 is composed of 14 different subunits. Subunits NuoA, H, J, K, L, M, N constitute the membrane sector of the complex. [4Fe-4S] cluster serves as cofactor.

The protein resides in the cell inner membrane. It catalyses the reaction a quinone + NADH + 5 H(+)(in) = a quinol + NAD(+) + 4 H(+)(out). Functionally, NDH-1 shuttles electrons from NADH, via FMN and iron-sulfur (Fe-S) centers, to quinones in the respiratory chain. The immediate electron acceptor for the enzyme in this species is believed to be ubiquinone. Couples the redox reaction to proton translocation (for every two electrons transferred, four hydrogen ions are translocated across the cytoplasmic membrane), and thus conserves the redox energy in a proton gradient. This chain is NADH-quinone oxidoreductase subunit I, found in Aromatoleum aromaticum (strain DSM 19018 / LMG 30748 / EbN1) (Azoarcus sp. (strain EbN1)).